We begin with the raw amino-acid sequence, 515 residues long: Maturase K (515 aa).

It belongs to the intron maturase 2 family. MatK subfamily.

Its subcellular location is the plastid. It localises to the chloroplast. In terms of biological role, usually encoded in the trnK tRNA gene intron. Probably assists in splicing its own and other chloroplast group II introns. In Pinus armandii (Chinese white pine), this protein is Maturase K.